A 117-amino-acid chain; its full sequence is Large ribosomal subunit protein bL20 (117 aa).

The protein belongs to the bacterial ribosomal protein bL20 family.

Binds directly to 23S ribosomal RNA and is necessary for the in vitro assembly process of the 50S ribosomal subunit. It is not involved in the protein synthesizing functions of that subunit. The protein is Large ribosomal subunit protein bL20 of Roseiflexus sp. (strain RS-1).